The primary structure comprises 92 residues: Small ribosomal subunit protein uS19 (92 aa).

This sequence belongs to the universal ribosomal protein uS19 family.

Functionally, protein S19 forms a complex with S13 that binds strongly to the 16S ribosomal RNA. The sequence is that of Small ribosomal subunit protein uS19 from Methylorubrum extorquens (strain CM4 / NCIMB 13688) (Methylobacterium extorquens).